A 249-amino-acid polypeptide reads, in one-letter code: Green-light absorbing proteorhodopsin (249 aa).

A signal peptide spans 1 to 17 (MKLLLILGSVIALPTFA). Transmembrane regions (helical) follow at residues 30 to 49 (GVSFWLVTAALLASTVFFFV), 62 to 84 (LTVSGLVTGIAFWHYMYMRGVWI), 99 to 121 (LLTVPLLICEFYLILAAATNVAG), 128 to 147 (LVGSLVMLVFGYMGEAGIMA), 151 to 168 (AFIIGCLAWVYMIYELWA), 189 to 211 (MMYIIIFGWAIYPVGYFTGYLMG), and 221 to 243 (LIYNLADFVNKILFGLIIWNVAV). An N6-(retinylidene)lysine modification is found at Lys231.

It belongs to the archaeal/bacterial/fungal opsin family. Contains one covalently linked retinal chromophore.

It localises to the cell membrane. In terms of biological role, light-driven proton pump that generates photothrophic energy. This Gamma-proteobacterium EBAC31A08 protein is Green-light absorbing proteorhodopsin.